The following is a 188-amino-acid chain: ATP synthase subunit p18, mitochondrial (188 aa).

A mitochondrion-targeting transit peptide spans 1 to 18 (MMRRVYSPVFCSVAAARF). PPR repeat units lie at residues 36–70 (TNTA…PPDI), 75–109 (ATLQ…EMQH), and 116–146 (NEES…METE).

In terms of assembly, F-type ATPases have 2 components, F(1) - the catalytic core - and F(o) - the membrane proton channel. F(1) has five subunits: alpha(3), beta(3), gamma(1), delta(1), epsilon(1), plus the additional subunit P18 (Tb427.05.1710) that is not present in F(1)F(o) ATP synthase from metazoa. Subunit P18 (Tb927.5.1710) interacts with the alpha subunit with a 1:1 stoichiometry; the interaction is direct. Subunit gamma is part of the central stalk. F(o) has three main subunits: a, b and c. The trypanosomal ATPase complex contains additional subunits that are not present in the F(1)F(o) ATP synthase from metazoa.

The protein resides in the mitochondrion. Its subcellular location is the mitochondrion inner membrane. Mitochondrial membrane ATP synthase (F(1)F(o) ATP synthase) produces ATP from ADP in the presence of a proton gradient across the membrane which is generated by electron transport complexes of the respiratory chain. F-type ATPases consist of two structural domains, F(1) - containing the extramembraneous catalytic core, and F(o) - containing the membrane proton channel, linked together by a central stalk and a peripheral stalk. During catalysis, ATP synthesis in the catalytic domain of F(1) is coupled via a rotary mechanism of the central stalk subunits to proton translocation. Subunits alpha and beta form the catalytic core in F(1). Rotation of the central stalk against the surrounding alpha(3)beta(3) subunits leads to hydrolysis of ATP in three separate catalytic sites on the beta subunits. Contrary to the procyclic, insect form that requires F(1)F(o) ATP synthase for ATP synthesis, the bloodstream form relies on ATP hydrolysis by F(1)F(o) ATP synthase to maintain its mitochondrial membrane potential. This chain is ATP synthase subunit p18, mitochondrial, found in Trypanosoma brucei brucei.